The primary structure comprises 241 residues: 2-C-methyl-D-erythritol 4-phosphate cytidylyltransferase (241 aa).

Belongs to the IspD/TarI cytidylyltransferase family. IspD subfamily.

It catalyses the reaction 2-C-methyl-D-erythritol 4-phosphate + CTP + H(+) = 4-CDP-2-C-methyl-D-erythritol + diphosphate. The protein operates within isoprenoid biosynthesis; isopentenyl diphosphate biosynthesis via DXP pathway; isopentenyl diphosphate from 1-deoxy-D-xylulose 5-phosphate: step 2/6. Catalyzes the formation of 4-diphosphocytidyl-2-C-methyl-D-erythritol from CTP and 2-C-methyl-D-erythritol 4-phosphate (MEP). This is 2-C-methyl-D-erythritol 4-phosphate cytidylyltransferase from Mycobacterium leprae (strain Br4923).